A 105-amino-acid polypeptide reads, in one-letter code: Urease subunit gamma (105 aa).

The protein belongs to the urease gamma subunit family. As to quaternary structure, heterotrimer of UreA (gamma), UreB (beta) and UreC (alpha) subunits. Three heterotrimers associate to form the active enzyme.

The protein resides in the cytoplasm. It catalyses the reaction urea + 2 H2O + H(+) = hydrogencarbonate + 2 NH4(+). Its pathway is nitrogen metabolism; urea degradation; CO(2) and NH(3) from urea (urease route): step 1/1. This is Urease subunit gamma from Bacillus subtilis (strain 168).